Reading from the N-terminus, the 308-residue chain is Aspartate carbamoyltransferase catalytic subunit (308 aa).

Carbamoyl phosphate-binding residues include arginine 58 and threonine 59. Lysine 86 provides a ligand contact to L-aspartate. Carbamoyl phosphate is bound by residues arginine 108, histidine 136, and glutamine 139. Arginine 169 and arginine 227 together coordinate L-aspartate. Positions 268 and 269 each coordinate carbamoyl phosphate.

Belongs to the aspartate/ornithine carbamoyltransferase superfamily. ATCase family. Heterododecamer (2C3:3R2) of six catalytic PyrB chains organized as two trimers (C3), and six regulatory PyrI chains organized as three dimers (R2).

It catalyses the reaction carbamoyl phosphate + L-aspartate = N-carbamoyl-L-aspartate + phosphate + H(+). The protein operates within pyrimidine metabolism; UMP biosynthesis via de novo pathway; (S)-dihydroorotate from bicarbonate: step 2/3. Catalyzes the condensation of carbamoyl phosphate and aspartate to form carbamoyl aspartate and inorganic phosphate, the committed step in the de novo pyrimidine nucleotide biosynthesis pathway. This chain is Aspartate carbamoyltransferase catalytic subunit, found in Chloroflexus aurantiacus (strain ATCC 29366 / DSM 635 / J-10-fl).